The chain runs to 178 residues: DNA-directed RNA polymerase subunit beta (178 aa).

This sequence belongs to the RNA polymerase beta chain family. As to quaternary structure, the RNAP catalytic core consists of 2 alpha, 1 beta, 1 beta' and 1 omega subunit. When a sigma factor is associated with the core the holoenzyme is formed, which can initiate transcription.

It carries out the reaction RNA(n) + a ribonucleoside 5'-triphosphate = RNA(n+1) + diphosphate. Functionally, DNA-dependent RNA polymerase catalyzes the transcription of DNA into RNA using the four ribonucleoside triphosphates as substrates. The protein is DNA-directed RNA polymerase subunit beta (rpoB) of Liberibacter asiaticus (Citrus greening disease).